A 478-amino-acid chain; its full sequence is Glutamate--tRNA ligase 1 (478 aa).

The 'HIGH' region signature appears at 10-20 (PSPTGFLHIGG). A 'KMSKS' region motif is present at residues 242 to 246 (KLSKR). Lys245 serves as a coordination point for ATP.

The protein belongs to the class-I aminoacyl-tRNA synthetase family. Glutamate--tRNA ligase type 1 subfamily. As to quaternary structure, monomer.

The protein localises to the cytoplasm. It carries out the reaction tRNA(Glu) + L-glutamate + ATP = L-glutamyl-tRNA(Glu) + AMP + diphosphate. Functionally, catalyzes the attachment of glutamate to tRNA(Glu) in a two-step reaction: glutamate is first activated by ATP to form Glu-AMP and then transferred to the acceptor end of tRNA(Glu). The protein is Glutamate--tRNA ligase 1 of Orientia tsutsugamushi (strain Boryong) (Rickettsia tsutsugamushi).